Reading from the N-terminus, the 160-residue chain is Phosphopantetheine adenylyltransferase (160 aa).

Threonine 11 lines the substrate pocket. Residues 11 to 12 (TF) and histidine 19 each bind ATP. Lysine 43, threonine 75, and arginine 89 together coordinate substrate. ATP contacts are provided by residues 90–92 (GLR), glutamate 100, and 125–131 (YSFLSSS).

The protein belongs to the bacterial CoaD family. As to quaternary structure, homohexamer. Requires Mg(2+) as cofactor.

The protein localises to the cytoplasm. It catalyses the reaction (R)-4'-phosphopantetheine + ATP + H(+) = 3'-dephospho-CoA + diphosphate. It functions in the pathway cofactor biosynthesis; coenzyme A biosynthesis; CoA from (R)-pantothenate: step 4/5. Functionally, reversibly transfers an adenylyl group from ATP to 4'-phosphopantetheine, yielding dephospho-CoA (dPCoA) and pyrophosphate. In Listeria monocytogenes serovar 1/2a (strain ATCC BAA-679 / EGD-e), this protein is Phosphopantetheine adenylyltransferase.